We begin with the raw amino-acid sequence, 134 residues long: CDGSH iron-sulfur domain-containing protein 2 homolog (134 aa).

The Lumenal segment spans residues 1-35; that stretch reads MESLSHLVKSTLPNYLSNLPVPDTLGGWFKLSFKD. A helical transmembrane segment spans residues 36–58; the sequence is WLALIPPTVVVAGIGYTGYLAFC. The Cytoplasmic portion of the chain corresponds to 59-134; it reads PAAQDRCSAK…DNVGPVVVKK (76 aa). 4 residues coordinate [2Fe-2S] cluster: C101, C103, C112, and H116.

The protein belongs to the CISD protein family. CISD2 subfamily. [2Fe-2S] cluster serves as cofactor.

It is found in the endoplasmic reticulum membrane. This Drosophila willistoni (Fruit fly) protein is CDGSH iron-sulfur domain-containing protein 2 homolog.